Here is a 259-residue protein sequence, read N- to C-terminus: UPF0246 protein Rfer_2372 (259 aa).

This sequence belongs to the UPF0246 family.

This is UPF0246 protein Rfer_2372 from Albidiferax ferrireducens (strain ATCC BAA-621 / DSM 15236 / T118) (Rhodoferax ferrireducens).